A 100-amino-acid chain; its full sequence is Urease subunit gamma (100 aa).

This sequence belongs to the urease gamma subunit family. Heterotrimer of UreA (gamma), UreB (beta) and UreC (alpha) subunits. Three heterotrimers associate to form the active enzyme.

The protein localises to the cytoplasm. It catalyses the reaction urea + 2 H2O + H(+) = hydrogencarbonate + 2 NH4(+). Its pathway is nitrogen metabolism; urea degradation; CO(2) and NH(3) from urea (urease route): step 1/1. The sequence is that of Urease subunit gamma from Burkholderia mallei (strain NCTC 10247).